The chain runs to 938 residues: Translation initiation factor IF-2 (938 aa).

Residues 57–205 (DKSKKVASKE…PKSEETKSEE (149 aa)) are compositionally biased toward basic and acidic residues. Positions 57–350 (DKSKKVASKE…RSADDLAQQE (294 aa)) are disordered. Positions 206 to 215 (TTEGGESEEK) are enriched in acidic residues. The span at 248 to 259 (KKEEKKEDDKKD) shows a compositional bias: basic and acidic residues. 2 stretches are compositionally biased toward basic residues: residues 260–270 (KDRRKKRRRRI) and 285–296 (GAKKGGRTRSKP). The span at 297-319 (ITKEEPTEEEVQKQVRETLEKLQ) shows a compositional bias: basic and acidic residues. Basic residues predominate over residues 323 to 333 (SKGKGAKYRRQ). Over residues 334 to 344 (KRDEHRQRSAD) the composition is skewed to basic and acidic residues. One can recognise a tr-type G domain in the interval 434 to 602 (TRAPIVTVMG…KVLLEAEILE (169 aa)). A G1 region spans residues 443 to 450 (GHVDHGKT). Residue 443–450 (GHVDHGKT) coordinates GTP. Positions 468–472 (GITQH) are G2. Residues 490 to 493 (DTPG) are G3. Residues 490–494 (DTPGH) and 544–547 (NKSD) contribute to the GTP site. Residues 544–547 (NKSD) are G4. Positions 580–582 (SAK) are G5.

It belongs to the TRAFAC class translation factor GTPase superfamily. Classic translation factor GTPase family. IF-2 subfamily.

It is found in the cytoplasm. Its function is as follows. One of the essential components for the initiation of protein synthesis. Protects formylmethionyl-tRNA from spontaneous hydrolysis and promotes its binding to the 30S ribosomal subunits. Also involved in the hydrolysis of GTP during the formation of the 70S ribosomal complex. This chain is Translation initiation factor IF-2, found in Christiangramia forsetii (strain DSM 17595 / CGMCC 1.15422 / KT0803) (Gramella forsetii).